A 252-amino-acid polypeptide reads, in one-letter code: 2-succinyl-6-hydroxy-2,4-cyclohexadiene-1-carboxylate synthase (252 aa).

Belongs to the AB hydrolase superfamily. MenH family. As to quaternary structure, monomer.

The enzyme catalyses 5-enolpyruvoyl-6-hydroxy-2-succinyl-cyclohex-3-ene-1-carboxylate = (1R,6R)-6-hydroxy-2-succinyl-cyclohexa-2,4-diene-1-carboxylate + pyruvate. It participates in quinol/quinone metabolism; 1,4-dihydroxy-2-naphthoate biosynthesis; 1,4-dihydroxy-2-naphthoate from chorismate: step 3/7. Its pathway is quinol/quinone metabolism; menaquinone biosynthesis. In terms of biological role, catalyzes a proton abstraction reaction that results in 2,5-elimination of pyruvate from 2-succinyl-5-enolpyruvyl-6-hydroxy-3-cyclohexene-1-carboxylate (SEPHCHC) and the formation of 2-succinyl-6-hydroxy-2,4-cyclohexadiene-1-carboxylate (SHCHC). This Salmonella arizonae (strain ATCC BAA-731 / CDC346-86 / RSK2980) protein is 2-succinyl-6-hydroxy-2,4-cyclohexadiene-1-carboxylate synthase.